We begin with the raw amino-acid sequence, 101 residues long: Large ribosomal subunit protein bL21 (101 aa).

It belongs to the bacterial ribosomal protein bL21 family. In terms of assembly, part of the 50S ribosomal subunit. Contacts protein L20.

In terms of biological role, this protein binds to 23S rRNA in the presence of protein L20. The protein is Large ribosomal subunit protein bL21 of Sulfurovum sp. (strain NBC37-1).